The chain runs to 318 residues: DNA repair nuclease/redox regulator APEX1 (318 aa).

The tract at residues 1–33 (MPKRGKKGAVAEDGDELRTEPEAKKSKTAAKKN) is necessary for interaction with YBX1, binding to RNA, association together with NPM1 to rRNA, endoribonuclease activity on abasic RNA and localization in the nucleoli. Positions 1–60 (MPKRGKKGAVAEDGDELRTEPEAKKSKTAAKKNDKEAAGEGPALYEDPPDQKTSPSGKPA) are disordered. Lys-6 and Lys-7 each carry N6-acetyllysine; by EP300. The Nuclear localization signal (NLS) motif lies at 8 to 13 (GAVAED). Positions 16-38 (ELRTEPEAKKSKTAAKKNDKEAA) are enriched in basic and acidic residues. The necessary for interaction with NPM1 and for efficient rRNA binding stretch occupies residues 23 to 33 (AKKSKTAAKKN). N6-acetyllysine is present on residues Lys-27, Lys-31, Lys-32, and Lys-35. Ser-54 bears the Phosphoserine mark. The Nuclear export signal (NES) signature appears at 64–80 (ICSWNVDGLRAWIKKKG). Residue Cys-65 is modified to S-nitrosocysteine; alternate. Cys-65 and Cys-93 form a disulfide bridge. A Mg(2+)-binding site is contributed by Asp-70. Residue Cys-93 is modified to S-nitrosocysteine; alternate. Mg(2+) is bound at residue Glu-96. The active site involves Tyr-171. The residue at position 197 (Lys-197) is an N6-acetyllysine. Mg(2+)-binding residues include Asp-210 and Asn-212. The Proton donor/acceptor role is filled by Asp-210. The residue at position 233 (Thr-233) is a Phosphothreonine; by CDK5. Residues 289–318 (HSLLPALCDSKIRSKALGSDHCPITLYLAL) are mitochondrial targeting sequence (MTS). Residue Asp-308 coordinates Mg(2+). Cys-310 carries the post-translational modification S-nitrosocysteine.

It belongs to the DNA repair enzymes AP/ExoA family. In terms of assembly, monomer. Homodimer; disulfide-linked. Component of the SET complex, composed of at least APEX1, SET, ANP32A, HMGB2, NME1 and TREX1. Associates with the dimer XRCC5/XRCC6 in a DNA-dependent manner. Interacts with SIRT1; the interaction is increased in the context of genotoxic stress. Interacts with HDAC1, HDAC2 and HDAC3; the interactions are not dependent on the APEX1 acetylation status. Interacts with XRCC1; the interaction is induced by SIRT1 and increased with the APEX1 acetylated form. Interacts with NPM1 (via N-terminal domain); the interaction is RNA-dependent and decreases in hydrogen peroxide-damaged cells. Interacts (via N-terminus) with YBX1 (via C-terminus); the interaction is increased in presence of APEX1 acetylated at Lys-6 and Lys-7. Interacts with HNRNPL; the interaction is DNA-dependent. Interacts (via N-terminus) with KPNA1 and KPNA2. Interacts with TXN; the interaction stimulates the FOS/JUN AP-1 complex DNA-binding activity in a redox-dependent manner. Interacts with GZMA, KRT8, MDM2, POLB, PRDX6, PRPF19, RPLP0, TOMM20 and WDR77. Binds to CDK5. The cofactor is Mg(2+). Requires Mn(2+) as cofactor. Post-translationally, phosphorylated. Phosphorylation by kinase PKC or casein kinase CK2 results in enhanced redox activity that stimulates binding of the FOS/JUN AP-1 complex to its cognate binding site. AP-endodeoxyribonuclease activity is not affected by CK2-mediated phosphorylation. Phosphorylation of Thr-233 by CDK5 in response to MPP(+)/MPTP (1-methyl-4-phenylpyridinium) reduces AP-endodeoxyribonuclease activity resulting in accumulation of DNA damage and contributing to neuronal death. In terms of processing, acetylated on Lys-6 and Lys-7. Acetylation is increased by the transcriptional coactivator EP300 acetyltransferase, genotoxic agents like H(2)O(2) and methyl methanesulfonate (MMS). Acetylation increases its binding affinity to the negative calcium response element (nCaRE) DNA promoter. The acetylated form induces a stronger binding of YBX1 to the Y-box sequence in the MDR1 promoter than the unacetylated form. Deacetylated on lysines. Lys-6 and Lys-7 are deacetylated by SIRT1. Cleaved at Lys-31 by granzyme A to create the mitochondrial form; leading in reduction of binding to DNA, AP endodeoxyribonuclease activity, redox activation of transcription factors and to enhanced cell death. Cleaved by granzyme K; leading to intracellular ROS accumulation and enhanced cell death after oxidative stress. Post-translationally, cys-69 and Cys-93 are nitrosylated in response to nitric oxide (NO) and lead to the exposure of the nuclear export signal (NES). In terms of processing, ubiquitinated by MDM2; leading to translocation to the cytoplasm and proteasomal degradation.

The protein localises to the nucleus. It is found in the nucleolus. Its subcellular location is the nucleus speckle. The protein resides in the endoplasmic reticulum. It localises to the cytoplasm. The protein localises to the mitochondrion. The enzyme catalyses a deoxyribonucleotide-2'-deoxyribose-5'-monophosphate-DNA + H2O = a 5'-end 2'-deoxyribose-5'-monophosphate-DNA + a 3'-end 2'-deoxyribonucleotide-DNA + H(+). The catalysed reaction is Exonucleolytic cleavage in the 3'- to 5'-direction to yield nucleoside 5'-phosphates.. It carries out the reaction a 3'-end 2'-deoxyribonucleotide-3'-phosphoglycolate-DNA + H2O = 2-phosphoglycolate + a 3'-end 2'-deoxyribonucleotide-DNA + H(+). It catalyses the reaction a 3'-end 2'-deoxyribonucleotide-8-oxoguanine-DNA + H2O = 8-oxo-dGMP + a 3'-end 2'-deoxyribonucleotide-DNA + H(+). NPM1 stimulates endodeoxyribonuclease activity on double-stranded DNA with AP sites, but inhibits endoribonuclease activity on single-stranded RNA containing AP sites. Multifunctional protein that plays a central role in the cellular response to oxidative stress. The two major activities of APEX1 are DNA repair and redox regulation of transcriptional factors. Functions as an apurinic/apyrimidinic (AP) endodeoxyribonuclease in the base excision repair (BER) pathway of DNA lesions induced by oxidative and alkylating agents. Initiates repair of AP sites in DNA by catalyzing hydrolytic incision of the phosphodiester backbone immediately adjacent to the damage, generating a single-strand break with 5'-deoxyribose phosphate and 3'-hydroxyl ends. Also incises at AP sites in the DNA strand of DNA/RNA hybrids, single-stranded DNA regions of R-loop structures, and single-stranded RNA molecules. Operates at switch sites of immunoglobulin (Ig) constant regions where it mediates Ig isotype class switch recombination. Processes AP sites induced by successive action of AICDA and UNG. Generates staggered nicks in opposite DNA strands resulting in the formation of double-strand DNA breaks that are finally resolved via non-homologous end joining repair pathway. Has 3'-5' exodeoxyribonuclease activity on mismatched deoxyribonucleotides at the 3' termini of nicked or gapped DNA molecules during short-patch BER. Possesses DNA 3' phosphodiesterase activity capable of removing lesions (such as phosphoglycolate and 8-oxoguanine) blocking the 3' side of DNA strand breaks. Also acts as an endoribonuclease involved in the control of single-stranded RNA metabolism. Plays a role in regulating MYC mRNA turnover by preferentially cleaving in between UA and CA dinucleotides of the MYC coding region determinant (CRD). In association with NMD1, plays a role in the rRNA quality control process during cell cycle progression. Acts as a loading factor for POLB onto non-incised AP sites in DNA and stimulates the 5'-terminal deoxyribose 5'-phosphate (dRp) excision activity of POLB. Exerts reversible nuclear redox activity to regulate DNA binding affinity and transcriptional activity of transcriptional factors by controlling the redox status of their DNA-binding domain, such as the FOS/JUN AP-1 complex after exposure to IR. Involved in calcium-dependent down-regulation of parathyroid hormone (PTH) expression by binding to negative calcium response elements (nCaREs). Together with HNRNPL or the dimer XRCC5/XRCC6, associates with nCaRE, acting as an activator of transcriptional repression. May also play a role in the epigenetic regulation of gene expression by participating in DNA demethylation. Stimulates the YBX1-mediated MDR1 promoter activity, when acetylated at Lys-6 and Lys-7, leading to drug resistance. Plays a role in protection from granzyme-mediated cellular repair leading to cell death. Binds DNA and RNA. Associates, together with YBX1, on the MDR1 promoter. Together with NPM1, associates with rRNA. This is DNA repair nuclease/redox regulator APEX1 (APEX1) from Pan paniscus (Pygmy chimpanzee).